The following is a 127-amino-acid chain: MIRTMMNAKIHRARVTESNLNYVGSITIDSDILEAVDILPNEKVAIVNNNNGARFETYVIAGERGSGKICLNGAASRLVEVGDVVIIMTYAQLNEEEIKNHAPKVAVMNEDNVIIEMIHEKENTIVL.

Catalysis depends on Ser-25, which acts as the Schiff-base intermediate with substrate; via pyruvic acid. Pyruvic acid (Ser) is present on Ser-25. Residue Thr-57 participates in substrate binding. Catalysis depends on Tyr-58, which acts as the Proton donor. Residue 73–75 participates in substrate binding; the sequence is GAA.

It belongs to the PanD family. Heterooctamer of four alpha and four beta subunits. Requires pyruvate as cofactor. Post-translationally, is synthesized initially as an inactive proenzyme, which is activated by self-cleavage at a specific serine bond to produce a beta-subunit with a hydroxyl group at its C-terminus and an alpha-subunit with a pyruvoyl group at its N-terminus.

It localises to the cytoplasm. It catalyses the reaction L-aspartate + H(+) = beta-alanine + CO2. It participates in cofactor biosynthesis; (R)-pantothenate biosynthesis; beta-alanine from L-aspartate: step 1/1. In terms of biological role, catalyzes the pyruvoyl-dependent decarboxylation of aspartate to produce beta-alanine. This is Aspartate 1-decarboxylase from Staphylococcus aureus (strain JH1).